The primary structure comprises 149 residues: Transcriptional regulator MraZ (149 aa).

SpoVT-AbrB domains follow at residues 7–54 and 83–126; these read KYVN…GISH and AVQL…QPQN.

Belongs to the MraZ family. In terms of assembly, forms oligomers.

It is found in the cytoplasm. The protein localises to the nucleoid. The polypeptide is Transcriptional regulator MraZ (Rickettsia rickettsii (strain Sheila Smith)).